The chain runs to 365 residues: LIM and cysteine-rich domains protein 1 (365 aa).

Serine 16 bears the Phosphoserine mark. The region spanning 99–206 is the PET domain; sequence MIMTNPIATG…GEVALPGQGG (108 aa). Positions 200–235 are disordered; that stretch reads ALPGQGGLPKEEGKQQEKPEGAETTAATTNGSLSDP. A compositionally biased stretch (basic and acidic residues) spans 208–220; that stretch reads PKEEGKQQEKPEG. LIM zinc-binding domains follow at residues 241–306 and 307–365; these read YVCE…SLRP and RCSG…SKRS.

Interacts with GATA1 and GATA4. Interacts with beta-dystroglycan. Interacts with GATA6. Expressed in the heart (at protein level). Expressed in many tissues with highest abundance in skeletal muscle.

Its subcellular location is the cytoplasm. It localises to the nucleus. Functionally, transcriptional cofactor that restricts GATA6 function by inhibiting DNA-binding, resulting in repression of GATA6 transcriptional activation of downstream target genes. Represses GATA6-mediated trans activation of lung- and cardiac tissue-specific promoters. Inhibits DNA-binding by GATA4 and GATA1 to the cTNC promoter. Plays a critical role in the development of cardiac hypertrophy via activation of calcineurin/nuclear factor of activated T-cells signaling pathway. This chain is LIM and cysteine-rich domains protein 1 (LMCD1), found in Homo sapiens (Human).